Here is a 597-residue protein sequence, read N- to C-terminus: Elongation factor 4 (597 aa).

The tr-type G domain maps to 2–184; the sequence is DHIRNFSIIA…SLIAKVPPPK (183 aa). Residues 14–19 and 131–134 each bind GTP; these read DHGKST and NKID.

It belongs to the TRAFAC class translation factor GTPase superfamily. Classic translation factor GTPase family. LepA subfamily.

It is found in the cell inner membrane. The catalysed reaction is GTP + H2O = GDP + phosphate + H(+). Its function is as follows. Required for accurate and efficient protein synthesis under certain stress conditions. May act as a fidelity factor of the translation reaction, by catalyzing a one-codon backward translocation of tRNAs on improperly translocated ribosomes. Back-translocation proceeds from a post-translocation (POST) complex to a pre-translocation (PRE) complex, thus giving elongation factor G a second chance to translocate the tRNAs correctly. Binds to ribosomes in a GTP-dependent manner. The sequence is that of Elongation factor 4 from Burkholderia ambifaria (strain MC40-6).